The chain runs to 754 residues: 5-methyltetrahydropteroyltriglutamate--homocysteine methyltransferase (754 aa).

5-methyltetrahydropteroyltri-L-glutamate contacts are provided by residues 17 to 20 (RELK) and K117. L-homocysteine is bound by residues 431 to 433 (IGS) and E484. L-methionine-binding positions include 431 to 433 (IGS) and E484. 5-methyltetrahydropteroyltri-L-glutamate is bound by residues 515-516 (RC) and W561. An L-homocysteine-binding site is contributed by D599. An L-methionine-binding site is contributed by D599. E605 is a binding site for 5-methyltetrahydropteroyltri-L-glutamate. Zn(2+)-binding residues include H641, C643, and E665. H694 (proton donor) is an active-site residue. Position 726 (C726) interacts with Zn(2+).

Belongs to the vitamin-B12 independent methionine synthase family. The cofactor is Zn(2+).

It carries out the reaction 5-methyltetrahydropteroyltri-L-glutamate + L-homocysteine = tetrahydropteroyltri-L-glutamate + L-methionine. Its pathway is amino-acid biosynthesis; L-methionine biosynthesis via de novo pathway; L-methionine from L-homocysteine (MetE route): step 1/1. Catalyzes the transfer of a methyl group from 5-methyltetrahydrofolate to homocysteine resulting in methionine formation. The protein is 5-methyltetrahydropteroyltriglutamate--homocysteine methyltransferase of Klebsiella pneumoniae subsp. pneumoniae (strain ATCC 700721 / MGH 78578).